The primary structure comprises 77 residues: Putative ankyrin repeat protein RC0956 (77 aa).

An ANK repeat occupies 8–38 (TDISPLMLASEYGQVTIVKYLLKHGNYNVKG).

The protein is Putative ankyrin repeat protein RC0956 of Rickettsia conorii (strain ATCC VR-613 / Malish 7).